Reading from the N-terminus, the 176-residue chain is uncharacterized protein (176 aa).

This is an uncharacterized protein from Dictyostelium discoideum (Social amoeba).